The primary structure comprises 360 residues: A-type ATP synthase subunit C (360 aa).

Residues 1–23 (MRLLERLWGKKPSRKSDKKKKGT) form a disordered region. Positions 9-22 (GKKPSRKSDKKKKG) are enriched in basic residues.

It belongs to the V-ATPase V0D/AC39 subunit family. In terms of assembly, has multiple subunits with at least A(3), B(3), C, D, E, F, H, I and proteolipid K(x).

The protein localises to the cell membrane. Functionally, component of the A-type ATP synthase that produces ATP from ADP in the presence of a proton gradient across the membrane. In Methanosarcina acetivorans (strain ATCC 35395 / DSM 2834 / JCM 12185 / C2A), this protein is A-type ATP synthase subunit C.